A 751-amino-acid polypeptide reads, in one-letter code: Lysine decarboxylase LdcA (751 aa).

This sequence belongs to the Orn/Lys/Arg decarboxylase class-I family. As to quaternary structure, homodecamer.

The enzyme catalyses L-lysine + H(+) = cadaverine + CO2. Its function is as follows. Plays an essential role in lysine utilization by acting as a lysine decarboxylase. The polypeptide is Lysine decarboxylase LdcA (Pseudomonas aeruginosa (strain ATCC 15692 / DSM 22644 / CIP 104116 / JCM 14847 / LMG 12228 / 1C / PRS 101 / PAO1)).